The chain runs to 362 residues: Oryzain gamma chain (362 aa).

Residues 1–24 form the signal peptide; that stretch reads MAHRRIILLLAAAAVAATSAVAAA. Positions 25–144 are cleaved as a propeptide — activation peptide; sequence SSGFDDSNPI…GNHRMRDAAA (120 aa). Asn-128 carries an N-linked (GlcNAc...) asparagine glycan. 2 disulfides stabilise this stretch: Cys-166/Cys-209 and Cys-200/Cys-242. Residue Cys-169 is part of the active site. N-linked (GlcNAc...) asparagine glycosylation occurs at Asn-258. A disulfide bridge links Cys-300 with Cys-350. Residues His-309 and Asn-329 contribute to the active site.

The protein belongs to the peptidase C1 family. Expressed only in seeds.

The polypeptide is Oryzain gamma chain (Oryza sativa subsp. japonica (Rice)).